The primary structure comprises 177 residues: Large ribosomal subunit protein uL6 (177 aa).

The protein belongs to the universal ribosomal protein uL6 family. Part of the 50S ribosomal subunit.

In terms of biological role, this protein binds to the 23S rRNA, and is important in its secondary structure. It is located near the subunit interface in the base of the L7/L12 stalk, and near the tRNA binding site of the peptidyltransferase center. The sequence is that of Large ribosomal subunit protein uL6 from Stutzerimonas stutzeri (strain A1501) (Pseudomonas stutzeri).